A 443-amino-acid polypeptide reads, in one-letter code: MKIGIINTKIRTVFSAFACMIAASLVCTMPARAVVEININKGVIEPLPIAITDFLSADQLGSNITSVIAADLERSGLFAPIDKGAFIEKISNPDAAPRFEDWKVINAQALVTGRITKQPDGRLKAEFHLWDTFGGQQMIGQQFFTTPDNWRRVAHIIADAIYERLTGDKGYFDTRVVFVDESGPAQKRVKRLAIMDQDGANVRFISDGRALSLTPRFSPNRQEVTYMSFEGGSPKVYLLQLETGQRELVGNFPGMTIAPRFSPDGQKVVMSLLQDDGSANIYTMDLRNRTTTRLTSSQAIDTGASYSPDGSQIVFTSDRGGRPQLYVMGADGSNPRRISMGDGSYSTPVWSPRGDLIAFTKQSQGQFSIGVTKTDGSGERLLTSGFHNEGPTWAPNGRVLMFFRKAAGAGGPKLFTIDLTGRNERQIQTPNFASDPAWSPLLE.

A signal peptide spans 1–33; it reads MKIGIINTKIRTVFSAFACMIAASLVCTMPARA.

Belongs to the TolB family. The Tol-Pal system is composed of five core proteins: the inner membrane proteins TolA, TolQ and TolR, the periplasmic protein TolB and the outer membrane protein Pal. They form a network linking the inner and outer membranes and the peptidoglycan layer.

It localises to the periplasm. Functionally, part of the Tol-Pal system, which plays a role in outer membrane invagination during cell division and is important for maintaining outer membrane integrity. This chain is Tol-Pal system protein TolB, found in Brucella suis (strain ATCC 23445 / NCTC 10510).